The sequence spans 577 residues: Proline--tRNA ligase (577 aa).

It belongs to the class-II aminoacyl-tRNA synthetase family. ProS type 1 subfamily. In terms of assembly, homodimer.

It localises to the cytoplasm. The catalysed reaction is tRNA(Pro) + L-proline + ATP = L-prolyl-tRNA(Pro) + AMP + diphosphate. Functionally, catalyzes the attachment of proline to tRNA(Pro) in a two-step reaction: proline is first activated by ATP to form Pro-AMP and then transferred to the acceptor end of tRNA(Pro). As ProRS can inadvertently accommodate and process non-cognate amino acids such as alanine and cysteine, to avoid such errors it has two additional distinct editing activities against alanine. One activity is designated as 'pretransfer' editing and involves the tRNA(Pro)-independent hydrolysis of activated Ala-AMP. The other activity is designated 'posttransfer' editing and involves deacylation of mischarged Ala-tRNA(Pro). The misacylated Cys-tRNA(Pro) is not edited by ProRS. This Chlamydia caviae (strain ATCC VR-813 / DSM 19441 / 03DC25 / GPIC) (Chlamydophila caviae) protein is Proline--tRNA ligase.